The sequence spans 587 residues: Aspartate--tRNA ligase (587 aa).

Glu-174 serves as a coordination point for L-aspartate. Residues Gln-198–Lys-201 form an aspartate region. Arg-220 serves as a coordination point for L-aspartate. ATP contacts are provided by residues Arg-220–Glu-222 and Gln-229. His-443 is an L-aspartate binding site. Glu-477 provides a ligand contact to ATP. Arg-484 provides a ligand contact to L-aspartate. An ATP-binding site is contributed by Gly-529 to Arg-532.

It belongs to the class-II aminoacyl-tRNA synthetase family. Type 1 subfamily. Homodimer.

The protein resides in the cytoplasm. The enzyme catalyses tRNA(Asp) + L-aspartate + ATP = L-aspartyl-tRNA(Asp) + AMP + diphosphate. Functionally, catalyzes the attachment of L-aspartate to tRNA(Asp) in a two-step reaction: L-aspartate is first activated by ATP to form Asp-AMP and then transferred to the acceptor end of tRNA(Asp). The polypeptide is Aspartate--tRNA ligase (Streptococcus pneumoniae (strain Taiwan19F-14)).